A 1758-amino-acid polypeptide reads, in one-letter code: uncharacterized protein (1758 aa).

Residues 1-12 form the signal peptide; the sequence is MCFFLGSRLAYA. Residues 1465–1758 enclose the Autotransporter domain; it reads ENLYNNGMWI…SFILGGNYYF (294 aa).

The protein resides in the cell outer membrane. This is an uncharacterized protein from Escherichia coli (strain K12).